Reading from the N-terminus, the 83-residue chain is Cytochrome b559 subunit alpha (83 aa).

A helical transmembrane segment spans residues 21-35 (IIHSITIPSLFIAGW). Residue His-23 participates in heme binding.

Belongs to the PsbE/PsbF family. As to quaternary structure, heterodimer of an alpha subunit and a beta subunit. PSII is composed of 1 copy each of membrane proteins PsbA, PsbB, PsbC, PsbD, PsbE, PsbF, PsbH, PsbI, PsbJ, PsbK, PsbL, PsbM, PsbT, PsbX, PsbY, PsbZ, Psb30/Ycf12, at least 3 peripheral proteins of the oxygen-evolving complex and a large number of cofactors. It forms dimeric complexes. The cofactor is heme b.

The protein localises to the plastid. It is found in the chloroplast thylakoid membrane. This b-type cytochrome is tightly associated with the reaction center of photosystem II (PSII). PSII is a light-driven water:plastoquinone oxidoreductase that uses light energy to abstract electrons from H(2)O, generating O(2) and a proton gradient subsequently used for ATP formation. It consists of a core antenna complex that captures photons, and an electron transfer chain that converts photonic excitation into a charge separation. This chain is Cytochrome b559 subunit alpha, found in Lotus japonicus (Lotus corniculatus var. japonicus).